Reading from the N-terminus, the 60-residue chain is Ixodegrin YY-39 (60 aa).

The signal sequence occupies residues 1-21 (MNAALIAALLILGALTLDATA). A Cell attachment site motif is present at residues 49–51 (RGD).

Belongs to the ixodegrin family. Contains 3 disulfide bonds. In terms of tissue distribution, expressed in salivary glands.

Its subcellular location is the secreted. Tick salivary platelet aggregation inhibitor that plays an important part in the anti-hemostatic strategy of ticks. Inhibits platelet aggregation induced by ADP, thrombin and thromboxane A2 (TXA2). Blocks platelet adhesion to soluble collagen (most probably through the binding to alpha-2/beta-1 integrin (ITGA2/ITGB1)) and binds to purified glycoprotein IIb/IIIa (ITGA2B/ITGB3) in a dose-dependent manner. In vivo, reduces thrombus weight effectively in a rat arteriovenous shunt model and inhibits thrombosis in a carrageenan-induced mouse tail thrombosis model. This Ixodes scapularis (Black-legged tick) protein is Ixodegrin YY-39.